The chain runs to 372 residues: Non-structural protein NS2 (372 aa).

A disordered region spans residues 259-326 (NQIEKQHTTH…QESEPESPSF (68 aa)). Positions 299-309 (TETTSTSSSHH) are enriched in low complexity.

This Aedes albopictus (Asian tiger mosquito) protein is Non-structural protein NS2 (NS).